A 255-amino-acid polypeptide reads, in one-letter code: NAD kinase (255 aa).

Asp-44 serves as the catalytic Proton acceptor. Residues 44 to 45 (DG), His-49, 114 to 115 (NE), Asp-144, Ala-152, 155 to 160 (SAYNLS), and Gln-216 each bind NAD(+).

It belongs to the NAD kinase family. A divalent metal cation serves as cofactor.

The protein localises to the cytoplasm. The enzyme catalyses NAD(+) + ATP = ADP + NADP(+) + H(+). Functionally, involved in the regulation of the intracellular balance of NAD and NADP, and is a key enzyme in the biosynthesis of NADP. Catalyzes specifically the phosphorylation on 2'-hydroxyl of the adenosine moiety of NAD to yield NADP. In Rickettsia bellii (strain OSU 85-389), this protein is NAD kinase.